The following is a 368-amino-acid chain: Quinolinate synthase (368 aa).

The iminosuccinate site is built by histidine 46 and serine 63. A [4Fe-4S] cluster-binding site is contributed by cysteine 110. Iminosuccinate is bound by residues 141 to 143 (YVN) and serine 162. [4Fe-4S] cluster is bound at residue cysteine 230. Iminosuccinate contacts are provided by residues 256 to 258 (HPE) and threonine 273. Cysteine 320 serves as a coordination point for [4Fe-4S] cluster.

The protein belongs to the quinolinate synthase family. Type 3 subfamily. It depends on [4Fe-4S] cluster as a cofactor.

It is found in the cytoplasm. It carries out the reaction iminosuccinate + dihydroxyacetone phosphate = quinolinate + phosphate + 2 H2O + H(+). The protein operates within cofactor biosynthesis; NAD(+) biosynthesis; quinolinate from iminoaspartate: step 1/1. Functionally, catalyzes the condensation of iminoaspartate with dihydroxyacetone phosphate to form quinolinate. This Bacillus cereus (strain B4264) protein is Quinolinate synthase.